We begin with the raw amino-acid sequence, 343 residues long: MDKLDQLVQQAAAEFAAAADGVQLEQAKARYLGKTGALTERLKGLGKLAAEERRVAGAEINRAKDAIEAALEARRQALREAVLVAQLAAEALDVTLPGRGAAQGGLHPVSRTLERIEALFRSIGFVVADGPEVETDWHNFTALNTPENHPARSMHDTFYLEGHEDVLLRTHTSPVQIRTMLDHVARYGDRESMPEIRVIVPGRVYRVDSDATHSPMFHQVEGLWVGESVSFADLKGVIADFLRKFFETEELQVRFRPSFFPFTEPSAEIDVAFMSGALKGRWLEIAGCGMVHPNVLRFGGIDPERYTGFAFGMGPDRLTMLRYGVNDLRLFFEGDLRFLSQFR.

Glutamate 264 serves as a coordination point for Mg(2+).

It belongs to the class-II aminoacyl-tRNA synthetase family. Phe-tRNA synthetase alpha subunit type 1 subfamily. Tetramer of two alpha and two beta subunits. Requires Mg(2+) as cofactor.

Its subcellular location is the cytoplasm. The enzyme catalyses tRNA(Phe) + L-phenylalanine + ATP = L-phenylalanyl-tRNA(Phe) + AMP + diphosphate + H(+). The chain is Phenylalanine--tRNA ligase alpha subunit from Aromatoleum aromaticum (strain DSM 19018 / LMG 30748 / EbN1) (Azoarcus sp. (strain EbN1)).